The chain runs to 299 residues: Protein NSG2 (299 aa).

At 1–108 (MANRGEPDPK…PSRTRQTRQN (108 aa)) the chain is on the cytoplasmic side. At Ser-90 the chain carries Phosphoserine. A helical membrane pass occupies residues 109–129 (ILHYLQAVLILSLSGFAYHEL). Topologically, residues 130–161 (SRNLHDNHLLHPDFASRPLLLGVKLCNWLSNG) are lumenal. Residues 162 to 182 (VLPNWLGYGVEGLLFGSVVPI) traverse the membrane as a helical segment. The Cytoplasmic portion of the chain corresponds to 183–237 (LDNIFQTEVVKSSVHHDSLTSVIRSINAMLGVTFGIRKIQWNSSLQAAGAWGLLN). Residues 238 to 258 (IILWLFFDGSISMLMSCICIG) traverse the membrane as a helical segment. Residues 259–268 (VGCCISCYKD) lie on the Lumenal side of the membrane. The chain crosses the membrane as a helical span at residues 269 to 289 (IIDGSQFLYFMDFYFLGSLMF). The Cytoplasmic segment spans residues 290 to 299 (GKLGRYLYSH).

The protein belongs to the INSIG family.

The protein localises to the endoplasmic reticulum membrane. In terms of biological role, stabilizes the HMG-CoA reductase HMG2 by preventing its HRD1-dependent degradation. Binds directly to the sterol-sensing domain (SSD)-containing transmembrane region of HMG2, promoting its folding to protect it from degradation. The polypeptide is Protein NSG2 (NSG2) (Saccharomyces cerevisiae (strain ATCC 204508 / S288c) (Baker's yeast)).